The following is a 283-amino-acid chain: 2-dehydro-3-deoxyphosphooctonate aldolase (283 aa).

Belongs to the KdsA family.

It is found in the cytoplasm. It catalyses the reaction D-arabinose 5-phosphate + phosphoenolpyruvate + H2O = 3-deoxy-alpha-D-manno-2-octulosonate-8-phosphate + phosphate. The protein operates within carbohydrate biosynthesis; 3-deoxy-D-manno-octulosonate biosynthesis; 3-deoxy-D-manno-octulosonate from D-ribulose 5-phosphate: step 2/3. It participates in bacterial outer membrane biogenesis; lipopolysaccharide biosynthesis. This Vibrio parahaemolyticus serotype O3:K6 (strain RIMD 2210633) protein is 2-dehydro-3-deoxyphosphooctonate aldolase.